The sequence spans 334 residues: Aspartate carbamoyltransferase catalytic subunit (334 aa).

The carbamoyl phosphate site is built by Arg-70 and Thr-71. Lys-98 lines the L-aspartate pocket. Residues Arg-120, His-150, and Gln-153 each coordinate carbamoyl phosphate. L-aspartate contacts are provided by Arg-183 and Arg-238. Residues Gly-279 and Pro-280 each contribute to the carbamoyl phosphate site.

The protein belongs to the aspartate/ornithine carbamoyltransferase superfamily. ATCase family. As to quaternary structure, heterododecamer (2C3:3R2) of six catalytic PyrB chains organized as two trimers (C3), and six regulatory PyrI chains organized as three dimers (R2).

It catalyses the reaction carbamoyl phosphate + L-aspartate = N-carbamoyl-L-aspartate + phosphate + H(+). Its pathway is pyrimidine metabolism; UMP biosynthesis via de novo pathway; (S)-dihydroorotate from bicarbonate: step 2/3. Its function is as follows. Catalyzes the condensation of carbamoyl phosphate and aspartate to form carbamoyl aspartate and inorganic phosphate, the committed step in the de novo pyrimidine nucleotide biosynthesis pathway. This is Aspartate carbamoyltransferase catalytic subunit from Marinomonas sp. (strain MWYL1).